The chain runs to 483 residues: CdaA regulatory protein CdaR (483 aa).

Residues 9-26 (WAVKIIALLFALLLYVAV) traverse the membrane as a helical segment. 4 consecutive YbbR-like domains span residues 55-135 (IPVK…TVTI), 143-228 (FPVE…KITV), 237-316 (VPFK…TLHI), and 329-394 (VPIK…VNGP). The segment at 410–483 (LTSKKSNTST…STANSQSSSE (74 aa)) is disordered. Residues 413 to 430 (KKSNTSTNDNSSNTSGNQ) are compositionally biased toward low complexity. Positions 431-454 (DTDKQTNDQKNNQQEDTKNTDKNN) are enriched in basic and acidic residues.

As to quaternary structure, interacts with CdaA.

It localises to the cell membrane. Functionally, upon coexpression in E.coli stimulates the diadenylate cyclase activity of CdaA about 20-fold. In B.subtilis c-di-AMP is a second messenger that mediates growth, DNA repair and cell wall homeostasis; it is toxic when present in excess. This Bacillus subtilis (strain 168) protein is CdaA regulatory protein CdaR.